Consider the following 548-residue polypeptide: Probable 2,3-bisphosphoglycerate-independent phosphoglycerate mutase (548 aa).

The Mn(2+) site is built by aspartate 20 and serine 73. Catalysis depends on serine 73, which acts as the Phosphoserine intermediate. Substrate-binding positions include histidine 134, arginine 164–aspartate 165, arginine 200, arginine 207, arginine 279–arginine 282, and lysine 354. Positions 422, 426, 463, 464, and 493 each coordinate Mn(2+).

This sequence belongs to the BPG-independent phosphoglycerate mutase family. In terms of assembly, monomer. The cofactor is Mn(2+).

It catalyses the reaction (2R)-2-phosphoglycerate = (2R)-3-phosphoglycerate. The protein operates within carbohydrate degradation; glycolysis; pyruvate from D-glyceraldehyde 3-phosphate: step 3/5. Its function is as follows. Catalyzes the interconversion of 2-phosphoglycerate and 3-phosphoglycerate. This chain is Probable 2,3-bisphosphoglycerate-independent phosphoglycerate mutase (gpmI), found in Leptospira interrogans serogroup Icterohaemorrhagiae serovar Lai (strain 56601).